Consider the following 702-residue polypeptide: Polynucleotide 5'-hydroxyl-kinase NOL9 (702 aa).

Ala-2 bears the N-acetylalanine mark. A Nucleolar localization signal motif is present at residues 31 to 47; the sequence is RRPRRRLGSLRWCGRRR. The interval 69 to 101 is disordered; the sequence is VSRAAAARRPNTATPSPIPSPTPASEPESEPEL. The span at 71-83 shows a compositional bias: low complexity; the sequence is RAAAARRPNTATP. Residue 306–313 coordinates ATP; the sequence is GSQDVGKS. The tract at residues 480 to 702 is interaction with LAS1L; the sequence is FADEEKESPV…RRPKFCRKMK (223 aa). Lys-485 is covalently cross-linked (Glycyl lysine isopeptide (Lys-Gly) (interchain with G-Cter in SUMO2)). Ser-487 bears the Phosphoserine mark. The segment covering 680 to 689 has biased composition (basic and acidic residues); sequence AREPEEAHKE. Residues 680 to 702 are disordered; that stretch reads AREPEEAHKEKPYRRPKFCRKMK. Basic residues predominate over residues 690-702; the sequence is KPYRRPKFCRKMK.

It belongs to the Clp1 family. NOL9/GRC3 subfamily. As to quaternary structure, interacts with PELP1, WDR18 and SENP3. Interacts with LAS1L to form an ITS2 pre-rRNA endonuclease-kinase complex.

The protein localises to the nucleus. Its subcellular location is the nucleolus. It carries out the reaction a 5'-end dephospho-2'-deoxyribonucleoside-DNA + ATP = a 5'-end 5'-phospho-2'-deoxyribonucleoside-DNA + ADP + H(+). The enzyme catalyses a 5'-end dephospho-ribonucleoside-RNA + ATP = a 5'-end 5'-phospho-ribonucleoside-RNA + ADP + H(+). Polynucleotide kinase that can phosphorylate the 5'-hydroxyl groups of single-stranded and double-stranded RNA and DNA substrates. Involved in rRNA processing and its kinase activity is required for the processing of the 32S precursor into 5.8S and 28S rRNAs, more specifically for the generation of the major 5.8S(S) form. Required for the efficient pre-rRNA processing of internal transcribed spacer 2 (ITS2). Associates with LAS1L to form an ITS2 pre-rRNA endonuclease-kinase complex and is responsible for the transport of this complex into the nucleolus. The polypeptide is Polynucleotide 5'-hydroxyl-kinase NOL9 (NOL9) (Homo sapiens (Human)).